Here is a 627-residue protein sequence, read N- to C-terminus: Membrane protein insertase YidC (627 aa).

Transmembrane regions (helical) follow at residues 3–23, 376–396, 450–470, 502–522, 534–554, and 558–578; these read KNTVIGLVLIGLVIFGFSWLN, WGLIILLLTLGIKLLISPLAY, LPMLLQFPFLIAMYMYFPTTI, FYGNHVSLFCLLMSISNILYI, EGMAMLKWMPYITTVMFLFFF, and ASGLCYYYFLSSIITVIQYMS.

This sequence belongs to the OXA1/ALB3/YidC family. Type 1 subfamily. Interacts with the Sec translocase complex via SecD. Specifically interacts with transmembrane segments of nascent integral membrane proteins during membrane integration.

Its subcellular location is the cell inner membrane. Required for the insertion and/or proper folding and/or complex formation of integral membrane proteins into the membrane. Involved in integration of membrane proteins that insert both dependently and independently of the Sec translocase complex, as well as at least some lipoproteins. Aids folding of multispanning membrane proteins. This chain is Membrane protein insertase YidC, found in Porphyromonas gingivalis (strain ATCC BAA-308 / W83).